The following is a 213-amino-acid chain: Orotate phosphoribosyltransferase (213 aa).

K26 is a binding site for 5-phospho-alpha-D-ribose 1-diphosphate. 34 to 35 contributes to the orotate binding site; it reads FF. 5-phospho-alpha-D-ribose 1-diphosphate is bound by residues 72 to 73, R99, K100, K103, H105, and 124 to 132; these read YK and DDVITAGTA. Positions 128 and 156 each coordinate orotate.

The protein belongs to the purine/pyrimidine phosphoribosyltransferase family. PyrE subfamily. In terms of assembly, homodimer. Mg(2+) is required as a cofactor.

It catalyses the reaction orotidine 5'-phosphate + diphosphate = orotate + 5-phospho-alpha-D-ribose 1-diphosphate. It functions in the pathway pyrimidine metabolism; UMP biosynthesis via de novo pathway; UMP from orotate: step 1/2. In terms of biological role, catalyzes the transfer of a ribosyl phosphate group from 5-phosphoribose 1-diphosphate to orotate, leading to the formation of orotidine monophosphate (OMP). This chain is Orotate phosphoribosyltransferase, found in Salmonella choleraesuis (strain SC-B67).